Consider the following 426-residue polypeptide: Glutamate-1-semialdehyde 2,1-aminomutase (426 aa).

Lys-265 carries the post-translational modification N6-(pyridoxal phosphate)lysine.

It belongs to the class-III pyridoxal-phosphate-dependent aminotransferase family. HemL subfamily. Homodimer. The cofactor is pyridoxal 5'-phosphate.

The protein resides in the cytoplasm. It carries out the reaction (S)-4-amino-5-oxopentanoate = 5-aminolevulinate. Its pathway is porphyrin-containing compound metabolism; protoporphyrin-IX biosynthesis; 5-aminolevulinate from L-glutamyl-tRNA(Glu): step 2/2. The chain is Glutamate-1-semialdehyde 2,1-aminomutase from Marinobacter nauticus (strain ATCC 700491 / DSM 11845 / VT8) (Marinobacter aquaeolei).